The primary structure comprises 541 residues: Eukaryotic translation initiation factor 3 subunit L (541 aa).

Residues 308–516 (TFSDILLYIQ…IHIADTKVSH (209 aa)) enclose the PCI domain.

Belongs to the eIF-3 subunit L family. As to quaternary structure, component of the eukaryotic translation initiation factor 3 (eIF-3) complex. The eIF-3 complex interacts with pix.

It localises to the cytoplasm. Component of the eukaryotic translation initiation factor 3 (eIF-3) complex, which is involved in protein synthesis of a specialized repertoire of mRNAs and, together with other initiation factors, stimulates binding of mRNA and methionyl-tRNAi to the 40S ribosome. The eIF-3 complex specifically targets and initiates translation of a subset of mRNAs involved in cell proliferation. In Drosophila pseudoobscura pseudoobscura (Fruit fly), this protein is Eukaryotic translation initiation factor 3 subunit L.